The following is a 212-amino-acid chain: Thymidylate kinase (212 aa).

Position 15 to 22 (15 to 22 (GIDGAGKS)) interacts with ATP.

Belongs to the thymidylate kinase family.

The catalysed reaction is dTMP + ATP = dTDP + ADP. In terms of biological role, phosphorylation of dTMP to form dTDP in both de novo and salvage pathways of dTTP synthesis. The chain is Thymidylate kinase from Chromobacterium violaceum (strain ATCC 12472 / DSM 30191 / JCM 1249 / CCUG 213 / NBRC 12614 / NCIMB 9131 / NCTC 9757 / MK).